The chain runs to 366 residues: Alanine racemase (366 aa).

Catalysis depends on lysine 40, which acts as the Proton acceptor; specific for D-alanine. The residue at position 40 (lysine 40) is an N6-(pyridoxal phosphate)lysine. Arginine 136 contacts substrate. Tyrosine 263 functions as the Proton acceptor; specific for L-alanine in the catalytic mechanism. A substrate-binding site is contributed by methionine 310.

The protein belongs to the alanine racemase family. It depends on pyridoxal 5'-phosphate as a cofactor.

It catalyses the reaction L-alanine = D-alanine. The protein operates within amino-acid biosynthesis; D-alanine biosynthesis; D-alanine from L-alanine: step 1/1. Functionally, catalyzes the interconversion of L-alanine and D-alanine. May also act on other amino acids. The chain is Alanine racemase (alr) from Streptococcus pyogenes serotype M5 (strain Manfredo).